The following is a 741-amino-acid chain: Catalase-peroxidase (741 aa).

The N-terminal stretch at 1 to 21 (MRNFRRFTIALLVLFLGPIGA) is a signal peptide. Positions 109 to 231 (WHSAGTYRIS…LAAVQMGLIY (123 aa)) form a cross-link, tryptophyl-tyrosyl-methioninium (Trp-Tyr) (with M-257). Histidine 110 (proton acceptor) is an active-site residue. Residues 231–257 (YVNPEGPNGNPDPLAAAKDIRETFGRM) constitute a cross-link (tryptophyl-tyrosyl-methioninium (Tyr-Met) (with W-109)). Histidine 272 provides a ligand contact to heme b.

This sequence belongs to the peroxidase family. Peroxidase/catalase subfamily. Homodimer or homotetramer. Heme b serves as cofactor. Post-translationally, formation of the three residue Trp-Tyr-Met cross-link is important for the catalase, but not the peroxidase activity of the enzyme.

It carries out the reaction H2O2 + AH2 = A + 2 H2O. The catalysed reaction is 2 H2O2 = O2 + 2 H2O. Bifunctional enzyme with both catalase and broad-spectrum peroxidase activity. This chain is Catalase-peroxidase, found in Leptospira biflexa serovar Patoc (strain Patoc 1 / Ames).